A 97-amino-acid chain; its full sequence is Small ribosomal subunit protein eS25 (97 aa).

The interval 1–24 is disordered; sequence MAPAASGAKKQKKKWSKGKVKDKA. Positions 9–18 are enriched in basic residues; the sequence is KKQKKKWSKG.

The protein belongs to the eukaryotic ribosomal protein eS25 family. Component of the small ribosomal subunit (SSU). Mature N.crassa ribosomes consist of a small (40S) and a large (60S) subunit. The 40S small subunit contains 1 molecule of ribosomal RNA (18S rRNA) and at least 32 different proteins. The large 60S subunit contains 3 rRNA molecules (26S, 5.8S and 5S rRNA) and at least 42 different proteins.

The protein localises to the cytoplasm. Functionally, component of the ribosome, a large ribonucleoprotein complex responsible for the synthesis of proteins in the cell. The small ribosomal subunit (SSU) binds messenger RNAs (mRNAs) and translates the encoded message by selecting cognate aminoacyl-transfer RNA (tRNA) molecules. The large subunit (LSU) contains the ribosomal catalytic site termed the peptidyl transferase center (PTC), which catalyzes the formation of peptide bonds, thereby polymerizing the amino acids delivered by tRNAs into a polypeptide chain. The nascent polypeptides leave the ribosome through a tunnel in the LSU and interact with protein factors that function in enzymatic processing, targeting, and the membrane insertion of nascent chains at the exit of the ribosomal tunnel. The protein is Small ribosomal subunit protein eS25 (rps-25) of Neurospora crassa (strain ATCC 24698 / 74-OR23-1A / CBS 708.71 / DSM 1257 / FGSC 987).